The sequence spans 463 residues: Chaperone SurA (463 aa).

Positions 1-25 (MTKPFSVVLASLLAITSTVSPLASA) are cleaved as a signal peptide. PpiC domains lie at 174 to 276 (GSQY…KLVE) and 289 to 388 (VTEY…QRVG). 2 disordered regions span residues 328–348 (QATA…GDLG) and 432–463 (RTGD…KPTR). Positions 440–452 (NATAAPAKSADPA) are enriched in low complexity. Over residues 453-463 (APSPPPAKPTR) the composition is skewed to pro residues.

The protein resides in the periplasm. The enzyme catalyses [protein]-peptidylproline (omega=180) = [protein]-peptidylproline (omega=0). Its function is as follows. Chaperone involved in the correct folding and assembly of outer membrane proteins. Recognizes specific patterns of aromatic residues and the orientation of their side chains, which are found more frequently in integral outer membrane proteins. May act in both early periplasmic and late outer membrane-associated steps of protein maturation. This chain is Chaperone SurA, found in Xanthomonas euvesicatoria pv. vesicatoria (strain 85-10) (Xanthomonas campestris pv. vesicatoria).